Consider the following 351-residue polypeptide: Glycerol-3-phosphate dehydrogenase 1-like protein (351 aa).

12 to 17 is an NAD(+) binding site; that stretch reads GSGNWG. K122 contacts substrate. NAD(+) is bound at residue A155. K206 (proton acceptor) is an active-site residue. R271, K298, and Q300 together coordinate NAD(+). Substrate is bound at residue 271 to 272; the sequence is RN.

It belongs to the NAD-dependent glycerol-3-phosphate dehydrogenase family. As to quaternary structure, interacts with SCN5A. Most highly expressed in heart tissue, with lower levels in the skeletal muscle, kidney, lung and other organs.

The protein localises to the cytoplasm. The catalysed reaction is sn-glycerol 3-phosphate + NAD(+) = dihydroxyacetone phosphate + NADH + H(+). Plays a role in regulating cardiac sodium current; decreased enzymatic activity with resulting increased levels of glycerol 3-phosphate activating the DPD1L-dependent SCN5A phosphorylation pathway, may ultimately lead to decreased sodium current; cardiac sodium current may also be reduced due to alterations of NAD(H) balance induced by DPD1L. The protein is Glycerol-3-phosphate dehydrogenase 1-like protein of Homo sapiens (Human).